A 230-amino-acid polypeptide reads, in one-letter code: Putative 14-3-3-like protein GF14-H (230 aa).

The protein belongs to the 14-3-3 family.

In terms of biological role, is associated with a DNA binding complex that binds to the G box, a well-characterized cis-acting DNA regulatory element found in plant genes. This chain is Putative 14-3-3-like protein GF14-H (GF14H), found in Oryza sativa subsp. japonica (Rice).